The chain runs to 102 residues: Small ribosomal subunit protein uS10 (102 aa).

Belongs to the universal ribosomal protein uS10 family. As to quaternary structure, part of the 30S ribosomal subunit.

Involved in the binding of tRNA to the ribosomes. The polypeptide is Small ribosomal subunit protein uS10 (Thermosipho melanesiensis (strain DSM 12029 / CIP 104789 / BI429)).